We begin with the raw amino-acid sequence, 507 residues long: Cobyric acid synthase (507 aa).

The GATase cobBQ-type domain occupies 273-468 (RPVIAVIAYP…LHGMFEDPAV (196 aa)). Catalysis depends on Cys-354, which acts as the Nucleophile. Residue His-460 is part of the active site.

The protein belongs to the CobB/CobQ family. CobQ subfamily.

It participates in cofactor biosynthesis; adenosylcobalamin biosynthesis. Catalyzes amidations at positions B, D, E, and G on adenosylcobyrinic A,C-diamide. NH(2) groups are provided by glutamine, and one molecule of ATP is hydrogenolyzed for each amidation. The polypeptide is Cobyric acid synthase (Polaromonas sp. (strain JS666 / ATCC BAA-500)).